A 354-amino-acid polypeptide reads, in one-letter code: DNA polymerase IV (354 aa).

In terms of domain architecture, UmuC spans 6–187 (IIHIDCDCFY…LPVARLHGVG (182 aa)). Mg(2+) contacts are provided by aspartate 10 and aspartate 105. Glutamate 106 is an active-site residue.

The protein belongs to the DNA polymerase type-Y family. Monomer. It depends on Mg(2+) as a cofactor.

The protein resides in the cytoplasm. It carries out the reaction DNA(n) + a 2'-deoxyribonucleoside 5'-triphosphate = DNA(n+1) + diphosphate. Functionally, poorly processive, error-prone DNA polymerase involved in untargeted mutagenesis. Copies undamaged DNA at stalled replication forks, which arise in vivo from mismatched or misaligned primer ends. These misaligned primers can be extended by PolIV. Exhibits no 3'-5' exonuclease (proofreading) activity. May be involved in translesional synthesis, in conjunction with the beta clamp from PolIII. The sequence is that of DNA polymerase IV from Pseudomonas entomophila (strain L48).